The primary structure comprises 115 residues: Transmembrane protein 14C (115 aa).

Helical transmembrane passes span 8–28 (LVPL…GGII), 33–53 (AGSV…GLGA), 63–83 (VWVF…RFYN), and 88–108 (MPAG…VAKI).

Belongs to the TMEM14 family.

Its subcellular location is the mitochondrion membrane. Its function is as follows. Required for normal heme biosynthesis. The polypeptide is Transmembrane protein 14C (Tmem14c) (Rattus norvegicus (Rat)).